The sequence spans 144 residues: Large ribosomal subunit protein uL15 (144 aa).

Positions 1–56 (MELNTLAPAPGAKSSKKRVGRGIGSGLGKTGGRGHKGQKSRSGGSVKPGFEGGQMP) are disordered. A compositionally biased stretch (gly residues) spans 21-31 (RGIGSGLGKTG).

It belongs to the universal ribosomal protein uL15 family. Part of the 50S ribosomal subunit.

Its function is as follows. Binds to the 23S rRNA. This is Large ribosomal subunit protein uL15 from Idiomarina loihiensis (strain ATCC BAA-735 / DSM 15497 / L2-TR).